The following is a 143-amino-acid chain: Probable prefoldin subunit 2 (143 aa).

It belongs to the prefoldin subunit beta family. Heterohexamer of two PFD-alpha type and four PFD-beta type subunits.

In terms of biological role, binds specifically to cytosolic chaperonin (c-CPN) and transfers target proteins to it. Binds to nascent polypeptide chain and promotes folding in an environment in which there are many competing pathways for nonnative proteins. This is Probable prefoldin subunit 2 from Drosophila melanogaster (Fruit fly).